We begin with the raw amino-acid sequence, 556 residues long: MSEADARPSNFIRQIIDKDLADGKHTSVHTRFPPEPNGYLHIGHAKSICLNFGIAQDYQGKCNLRFDDTNPEKEDIEYVESIKNDVSWLGFEWDDEICYSSNYFDKLYEYAVELINKGLAYVDELSPEQIREYRGTLTAPGKPSPYRDRSAEENLALFEKMRDGGFEEGKACLRAKIDMASSFMVMRDPVLYRVRFASHHQTGDKWCIYPMYDFTHCISDALEGITHSICTLEFMDNRRLYDWVLDNITIDCRPHQYEFSRLNLEYTVMSKRKLNQLVTEKLVNGWDDPRMPTISGLRRRGFTPASIREFCKRIGVTKQENMIEFSSLESCIRDDLNENAPRAMAVLDPVKLVIENFPAGEVENLTVANHPNKPEMGEREVPFSREIWIEREDFREEANKKYKRLVLGSEVRLRGAYVIKAERVEKDDEGNITTIFCTYDSETLGVNPADGRKVRGVIHWVSADKGVPAEIRLYDRLFTVPNPAAADDFASTINPESLTVMNGFVEPSLVEAEAEKGYQFERMGYFCADSKDSSKEHLVFNRTVGLRDTWAKIEAK.

The short motif at 34–44 (PEPNGYLHIGH) is the 'HIGH' region element. ATP contacts are provided by residues 35–37 (EPN) and 41–47 (HIGHAKS). 2 residues coordinate L-glutamine: Asp67 and Tyr212. Residues Thr231, 261 to 262 (RL), and 269 to 271 (MSK) each bind ATP. The 'KMSKS' region signature appears at 268 to 272 (VMSKR).

The protein belongs to the class-I aminoacyl-tRNA synthetase family. As to quaternary structure, monomer.

It is found in the cytoplasm. The catalysed reaction is tRNA(Gln) + L-glutamine + ATP = L-glutaminyl-tRNA(Gln) + AMP + diphosphate. The protein is Glutamine--tRNA ligase of Vibrio vulnificus (strain YJ016).